A 400-amino-acid chain; its full sequence is Elongation factor Tu 1 (400 aa).

The tr-type G domain occupies 10–209 (KPHVNIGTIG…AVDEYIPTPQ (200 aa)). Residues 19–26 (GHVDHGKT) are G1. 19 to 26 (GHVDHGKT) is a GTP binding site. Mg(2+) is bound at residue T26. Positions 60–64 (GITIN) are G2. The interval 81 to 84 (DCPG) is G3. GTP is bound by residues 81 to 85 (DCPGH) and 136 to 139 (NKAD). Residues 136–139 (NKAD) form a G4 region. The interval 174–176 (SAL) is G5.

This sequence belongs to the TRAFAC class translation factor GTPase superfamily. Classic translation factor GTPase family. EF-Tu/EF-1A subfamily. Monomer.

It is found in the cytoplasm. It catalyses the reaction GTP + H2O = GDP + phosphate + H(+). In terms of biological role, GTP hydrolase that promotes the GTP-dependent binding of aminoacyl-tRNA to the A-site of ribosomes during protein biosynthesis. In Pelotomaculum thermopropionicum (strain DSM 13744 / JCM 10971 / SI), this protein is Elongation factor Tu 1.